A 65-amino-acid chain; its full sequence is Large ribosomal subunit protein uL29 (65 aa).

It belongs to the universal ribosomal protein uL29 family.

The sequence is that of Large ribosomal subunit protein uL29 from Buchnera aphidicola subsp. Cinara cedri (strain Cc).